Reading from the N-terminus, the 269-residue chain is Mitochondrial S-adenosylmethionine carrier protein (269 aa).

Solcar repeat units lie at residues 4–77, 85–167, and 176–264; these read REFC…AKQL, LSPI…LKDL, and VDSW…VRTL. Helical transmembrane passes span 5-25, 49-69, 84-104, 141-161, 181-201, and 237-257; these read EFCA…LILF, IYAG…AFFV, YLSP…ACLI, RGYK…FPLW, SAVC…PLDV, and FAGV…FLGA.

The protein belongs to the mitochondrial carrier (TC 2.A.29) family.

It is found in the mitochondrion inner membrane. It carries out the reaction S-adenosyl-L-homocysteine(out) + S-adenosyl-L-methionine(in) = S-adenosyl-L-homocysteine(in) + S-adenosyl-L-methionine(out). Mitochondrial S-adenosyl-L-methionine/S-adenosyl-L-homocysteine antiporter. Mediates the exchange of cytosolic S-adenosyl-L-methionine, the predominant methyl-group donor for macromolecule methylation processes, for mitochondrial S-adenosylhomocysteine(SAH), a by-product of methylation reactions. In Xenopus tropicalis (Western clawed frog), this protein is Mitochondrial S-adenosylmethionine carrier protein (slc25a26).